The chain runs to 161 residues: Cytochrome c-type biogenesis protein CcmE (161 aa).

Topologically, residues 1–8 (MNARRKKR) are cytoplasmic. A helical; Signal-anchor for type II membrane protein membrane pass occupies residues 9-29 (LALATALIGGVAAIASLLLYA). At 30-161 (LNSNLNLFYT…DYNAEQKSGY (132 aa)) the chain is on the periplasmic side. Positions 131 and 135 each coordinate heme.

Belongs to the CcmE/CycJ family.

The protein resides in the cell inner membrane. Heme chaperone required for the biogenesis of c-type cytochromes. Transiently binds heme delivered by CcmC and transfers the heme to apo-cytochromes in a process facilitated by CcmF and CcmH. The polypeptide is Cytochrome c-type biogenesis protein CcmE (Shewanella woodyi (strain ATCC 51908 / MS32)).